The sequence spans 626 residues: Putative ankyrin repeat protein L768 (626 aa).

ANK repeat units lie at residues 217 to 246 (NLYD…EYDF), 333 to 362 (DLDM…NINK), 421 to 451 (TAEN…TEHI), 515 to 545 (SNLK…NQDY), and 547 to 571 (QWAL…NVNP).

The sequence is that of Putative ankyrin repeat protein L768 from Acanthamoeba polyphaga mimivirus (APMV).